The following is a 623-amino-acid chain: Transcriptional activator of proteases prtT (623 aa).

The segment at residues 50-79 is a DNA-binding region (zn(2)-C6 fungal-type); it reads CHTCRKLKTRCDLDPRGHACRRCLSLRIDC.

The protein belongs to the prtT family.

It localises to the nucleus. In terms of biological role, transcription factor required for protein utilization and degradation. Regulates transcription of major secreted proteases. The polypeptide is Transcriptional activator of proteases prtT (prtT) (Aspergillus niger (strain ATCC MYA-4892 / CBS 513.88 / FGSC A1513)).